We begin with the raw amino-acid sequence, 274 residues long: Speedy protein C (274 aa).

Residues 37 to 169 (HQEVQAFLSL…FHWAWTRDRR (133 aa)) form a speedy/Ringo box; Required for CDK-binding region.

This sequence belongs to the Speedy/Ringo family. Interacts with CDK1 and CDK2. Interacts with AURKB. Expressed in a variety of tissues including bone marrow, kidney, small intestine, liver, placenta and testis.

It is found in the cytoplasm. Promotes progression through the cell cycle via binding and activation of CDK1 and CDK2. Involved in the spindle-assembly checkpoint. Required for recruitment of MAD2L1, BUBR1 and BUB1 to kinetochores. Required for the correct localization of the active form of Aurora B in prometaphase. The protein is Speedy protein C of Homo sapiens (Human).